The chain runs to 677 residues: Methionine--tRNA ligase (677 aa).

The 'HIGH' region signature appears at 15–25 (PYANGSIHLGH). Residues Cys146, Cys149, Cys159, and Cys162 each contribute to the Zn(2+) site. The 'KMSKS' region motif lies at 333–337 (KMSKS). Lys336 provides a ligand contact to ATP. Positions 575–677 (DFAKVDLRVA…AGAKPGHQVK (103 aa)) constitute a tRNA-binding domain.

This sequence belongs to the class-I aminoacyl-tRNA synthetase family. MetG type 1 subfamily. As to quaternary structure, homodimer. Requires Zn(2+) as cofactor.

It is found in the cytoplasm. The enzyme catalyses tRNA(Met) + L-methionine + ATP = L-methionyl-tRNA(Met) + AMP + diphosphate. Its function is as follows. Is required not only for elongation of protein synthesis but also for the initiation of all mRNA translation through initiator tRNA(fMet) aminoacylation. The polypeptide is Methionine--tRNA ligase (Escherichia coli O157:H7).